We begin with the raw amino-acid sequence, 449 residues long: Glucose-6-phosphate isomerase (449 aa).

Glu290 functions as the Proton donor in the catalytic mechanism. Catalysis depends on residues His311 and Lys425.

This sequence belongs to the GPI family.

It localises to the cytoplasm. It carries out the reaction alpha-D-glucose 6-phosphate = beta-D-fructose 6-phosphate. The protein operates within carbohydrate biosynthesis; gluconeogenesis. It functions in the pathway carbohydrate degradation; glycolysis; D-glyceraldehyde 3-phosphate and glycerone phosphate from D-glucose: step 2/4. Catalyzes the reversible isomerization of glucose-6-phosphate to fructose-6-phosphate. This chain is Glucose-6-phosphate isomerase, found in Exiguobacterium sibiricum (strain DSM 17290 / CCUG 55495 / CIP 109462 / JCM 13490 / 255-15).